Here is a 286-residue protein sequence, read N- to C-terminus: Ribosomal RNA small subunit methyltransferase A (286 aa).

Residues N31, I33, G58, E80, D106, and N125 each contribute to the S-adenosyl-L-methionine site.

Belongs to the class I-like SAM-binding methyltransferase superfamily. rRNA adenine N(6)-methyltransferase family. RsmA subfamily.

It is found in the cytoplasm. It catalyses the reaction adenosine(1518)/adenosine(1519) in 16S rRNA + 4 S-adenosyl-L-methionine = N(6)-dimethyladenosine(1518)/N(6)-dimethyladenosine(1519) in 16S rRNA + 4 S-adenosyl-L-homocysteine + 4 H(+). Its function is as follows. Specifically dimethylates two adjacent adenosines (A1518 and A1519) in the loop of a conserved hairpin near the 3'-end of 16S rRNA in the 30S particle. May play a critical role in biogenesis of 30S subunits. The protein is Ribosomal RNA small subunit methyltransferase A of Wolbachia pipientis wMel.